The following is a 178-amino-acid chain: Peptide methionine sulfoxide reductase MsrA (178 aa).

The active site involves Cys-11.

It belongs to the MsrA Met sulfoxide reductase family.

The enzyme catalyses L-methionyl-[protein] + [thioredoxin]-disulfide + H2O = L-methionyl-(S)-S-oxide-[protein] + [thioredoxin]-dithiol. The catalysed reaction is [thioredoxin]-disulfide + L-methionine + H2O = L-methionine (S)-S-oxide + [thioredoxin]-dithiol. Its function is as follows. Has an important function as a repair enzyme for proteins that have been inactivated by oxidation. Catalyzes the reversible oxidation-reduction of methionine sulfoxide in proteins to methionine. The sequence is that of Peptide methionine sulfoxide reductase MsrA from Natronomonas pharaonis (strain ATCC 35678 / DSM 2160 / CIP 103997 / JCM 8858 / NBRC 14720 / NCIMB 2260 / Gabara) (Halobacterium pharaonis).